The primary structure comprises 314 residues: L-lactate dehydrogenase 2 (314 aa).

NAD(+) contacts are provided by residues V16, D37, K42, Y68, and 82 to 83 (GV). Substrate is bound by residues Q85 and R91. Residues S104, 121–123 (ASN), and T146 each bind NAD(+). Position 123 to 126 (123 to 126 (NPVD)) interacts with substrate. 151–154 (DTTR) contacts substrate. Positions 156 and 171 each coordinate beta-D-fructose 1,6-bisphosphate. Catalysis depends on H178, which acts as the Proton acceptor. At Y223 the chain carries Phosphotyrosine. T232 is a substrate binding site.

It belongs to the LDH/MDH superfamily. LDH family. Homotetramer.

The protein resides in the cytoplasm. The catalysed reaction is (S)-lactate + NAD(+) = pyruvate + NADH + H(+). It participates in fermentation; pyruvate fermentation to lactate; (S)-lactate from pyruvate: step 1/1. Allosterically activated by fructose 1,6-bisphosphate (FBP). Functionally, catalyzes the conversion of lactate to pyruvate. This Lactococcus lactis subsp. lactis (strain IL1403) (Streptococcus lactis) protein is L-lactate dehydrogenase 2.